The chain runs to 319 residues: Urease accessory protein UreD (319 aa).

The tract at residues P254–E273 is disordered. The span at A262–E273 shows a compositional bias: basic and acidic residues.

The protein belongs to the UreD family. In terms of assembly, ureD, UreF and UreG form a complex that acts as a GTP-hydrolysis-dependent molecular chaperone, activating the urease apoprotein by helping to assemble the nickel containing metallocenter of UreC. The UreE protein probably delivers the nickel.

It localises to the cytoplasm. In terms of biological role, required for maturation of urease via the functional incorporation of the urease nickel metallocenter. The protein is Urease accessory protein UreD of Frankia casuarinae (strain DSM 45818 / CECT 9043 / HFP020203 / CcI3).